A 264-amino-acid polypeptide reads, in one-letter code: Probable membrane transporter protein HI_0902 (264 aa).

9 helical membrane passes run 4–24 (FILL…LFGI), 28–48 (LVIV…ESLL), 49–69 (MSTA…GSAQ), 81–101 (AVRI…LFIG), 107–127 (ISAK…VLSI), 147–167 (ILIG…IVPF), 183–203 (AFCG…SGWG), 210–230 (YSLG…SFFT), and 243–263 (VSTL…NMFL).

It belongs to the 4-toluene sulfonate uptake permease (TSUP) (TC 2.A.102) family.

It localises to the cell membrane. This Haemophilus influenzae (strain ATCC 51907 / DSM 11121 / KW20 / Rd) protein is Probable membrane transporter protein HI_0902.